A 424-amino-acid chain; its full sequence is Histidine--tRNA ligase (424 aa).

Belongs to the class-II aminoacyl-tRNA synthetase family. As to quaternary structure, homodimer.

It is found in the cytoplasm. The catalysed reaction is tRNA(His) + L-histidine + ATP = L-histidyl-tRNA(His) + AMP + diphosphate + H(+). This is Histidine--tRNA ligase from Francisella philomiragia subsp. philomiragia (strain ATCC 25017 / CCUG 19701 / FSC 153 / O#319-036).